Here is an 88-residue protein sequence, read N- to C-terminus: UPF0335 protein WRi_003770 (88 aa).

The protein belongs to the UPF0335 family.

The sequence is that of UPF0335 protein WRi_003770 from Wolbachia sp. subsp. Drosophila simulans (strain wRi).